The following is a 122-amino-acid chain: Large ribosomal subunit protein uL14 (122 aa).

The protein belongs to the universal ribosomal protein uL14 family. As to quaternary structure, part of the 50S ribosomal subunit. Forms a cluster with proteins L3 and L19. In the 70S ribosome, L14 and L19 interact and together make contacts with the 16S rRNA in bridges B5 and B8.

Its function is as follows. Binds to 23S rRNA. Forms part of two intersubunit bridges in the 70S ribosome. The protein is Large ribosomal subunit protein uL14 of Rhodococcus jostii (strain RHA1).